Reading from the N-terminus, the 142-residue chain is Lipoprotein MlpI (142 aa).

The N-terminal stretch at 1–17 (MKIINILFCLFLLMLNS) is a signal peptide. Residue C18 is the site of N-palmitoyl cysteine attachment. The S-diacylglycerol cysteine moiety is linked to residue C18. The segment at 22–54 (DTNTSQTKSRQKRDLTQKEATQEKPKSKEDLLR) is disordered. A compositionally biased stretch (basic and acidic residues) spans 33–54 (KRDLTQKEATQEKPKSKEDLLR).

It belongs to the Multicopy lipoprotein (Mlp) family.

It localises to the cell outer membrane. Functionally, an outer membrane protein that may participate in pathogenesis. Some human Lyme disease patients have antibodies against this protein. The Mlp proteins probably undergo intragenic recombination, generating new alleles. The chain is Lipoprotein MlpI from Borreliella burgdorferi (strain ATCC 35210 / DSM 4680 / CIP 102532 / B31) (Borrelia burgdorferi).